The chain runs to 97 residues: Protein CYSTEINE-RICH TRANSMEMBRANE MODULE 7 (97 aa).

A disordered region spans residues 1-27 (MASYHVSHDSYQSPGPSPLYQPIIEAP). The span at 15–27 (GPSPLYQPIIEAP) shows a compositional bias: pro residues. The chain crosses the membrane as a helical span at residues 68–88 (YVGCFPFLRSCLTTLCCCWFV).

The protein belongs to the CYSTM1 family. As to quaternary structure, homodimer and heterodimers. Interacts with CYSTM3, CYSTM4, CYSTM5, CYSTM6, CYSTM10, WIH1/CYSTM13 and CYSTM11. Binds weakly to CYSTM1, CYSTM2 and CYSTM12. As to expression, mostly expressed in siliques and, to a lower extent, in stems, roots, leaves and flowers.

It localises to the cell membrane. In terms of biological role, involved in resistance to abiotic stress. The polypeptide is Protein CYSTEINE-RICH TRANSMEMBRANE MODULE 7 (Arabidopsis thaliana (Mouse-ear cress)).